Consider the following 123-residue polypeptide: Basic phospholipase A2 Ph-TX1 (123 aa).

Residues Tyr27, Gly29, and Gly31 each contribute to the Ca(2+) site. 6 disulfides stabilise this stretch: Cys28/Cys45, Cys44/Cys96, Cys50/Cys123, Cys51/Cys89, Cys59/Cys83, and Cys77/Cys87. His48 is an active-site residue. A Ca(2+)-binding site is contributed by Asp49. Asp90 is an active-site residue.

It belongs to the phospholipase A2 family. Group II subfamily. D49 sub-subfamily. In terms of assembly, monomer. Ca(2+) serves as cofactor. In terms of tissue distribution, expressed by the venom gland.

Its subcellular location is the secreted. It carries out the reaction a 1,2-diacyl-sn-glycero-3-phosphocholine + H2O = a 1-acyl-sn-glycero-3-phosphocholine + a fatty acid + H(+). With respect to regulation, inhibited by divalent cations different from calcium ions (cadmium, magnesium, manganese, zinc), since they act as competitive antagonists of this cofactor. Snake venom phospholipase A2 (PLA2) that induces in vivo myotoxicity, moderates footpad edema, and causes in vitro neuromuscular blockade. PLA2 catalyzes the calcium-dependent hydrolysis of the 2-acyl groups in 3-sn-phosphoglycerides. The chain is Basic phospholipase A2 Ph-TX1 from Bothrocophias hyoprora (Amazonian hognose viper).